Here is a 462-residue protein sequence, read N- to C-terminus: Asparagine--tRNA ligase (462 aa).

The protein belongs to the class-II aminoacyl-tRNA synthetase family. As to quaternary structure, homodimer.

It is found in the cytoplasm. It catalyses the reaction tRNA(Asn) + L-asparagine + ATP = L-asparaginyl-tRNA(Asn) + AMP + diphosphate + H(+). In Borrelia garinii subsp. bavariensis (strain ATCC BAA-2496 / DSM 23469 / PBi) (Borreliella bavariensis), this protein is Asparagine--tRNA ligase.